The sequence spans 1167 residues: Pesticidal crystal protein Cry1Ja (1167 aa).

This sequence belongs to the delta endotoxin family.

In terms of biological role, promotes colloidosmotic lysis by binding to the midgut epithelial cells of many lepidopteran larvae. This is Pesticidal crystal protein Cry1Ja (cry1Ja) from Bacillus thuringiensis.